The primary structure comprises 690 residues: Peroxidase (690 aa).

A signal peptide spans 1–20 (MIRARDLLLLALLGFISSAL). C100 and C112 are joined by a disulfide. H185 (proton acceptor) is an active-site residue. N-linked (GlcNAc...) asparagine glycosylation occurs at N310. The cysteines at positions 315 and 324 are disulfide-linked. H437 provides a ligand contact to heme b. 2 disulfide bridges follow: C536–C592 and C636–C662.

It belongs to the peroxidase family. XPO subfamily. It depends on heme b as a cofactor.

The protein resides in the secreted. It catalyses the reaction 2 a phenolic donor + H2O2 = 2 a phenolic radical donor + 2 H2O. Involved in the chorion hardening process, through protein cross-linking mediated by the formation of di- and tri-tyrosine bonds. The polypeptide is Peroxidase (Pxd) (Drosophila melanogaster (Fruit fly)).